The following is a 312-amino-acid chain: Atrochrysone carboxyl ACP thioesterase AacuM (312 aa).

H103, H105, D107, and H108 together coordinate Zn(2+). The active-site Proton donor/acceptor is the D107.

This sequence belongs to the metallo-beta-lactamase superfamily. Zn(2+) is required as a cofactor.

It catalyses the reaction atrochrysone carboxyl-[ACP] + H2O = atrochrysone carboxylate + holo-[ACP] + H(+). Its pathway is secondary metabolite biosynthesis. In terms of biological role, atrochrysone carboxyl ACP thioesterase; part of the gene cluster that mediates the biosynthesis of the tetrahydroxanthone dimer secalonic acid D. The pathway begins with the synthesis of atrochrysone thioester by the polyketide synthase AacuL. The atrochrysone carboxyl ACP thioesterase AacuM then breaks the thioester bond and releases the atrochrysone carboxylic acid from AacuL. Atrochrysone carboxylic acid is decarboxylated by the decarboxylase AacuI, and oxidized by the anthrone oxygenase AacuG to yield emodin. Emodin is then reduced to emodin hydroquinone by a yet unidentified oxidoreductase. A-ring reduction by the short chain dehydrogenase AacuN, dehydration by the scytalone dehydratase-like protein AacuK and probable spontaneous re-oxidation, results in overall deoxygenation to chrysophanol. Baeyer-Villiger oxidation by the Baeyer-Villiger monooxygenase (BVMO) AacuH then yields monodictyphenone. Monodictyphenone is transformed into compounds with the tetrahydroxanthone skeleton via methylesterification by the methyltransferase AacuQ, followed by the action of the flavin-dependent monooxygenase AacuC, the isomerase AacuP, and the short chain dehydrogenase/reductase AacuF or AacuD. AacuF and AacuD should accept the same compound as a substrate but perform the ketoreduction with a different stereoselectivity, thus yielding blennolides B and A, respectively. In the final step of the biosynthesis, the cytochrome P450 monooxygenase AacuE accepts blennolide B and/or blennolide A to conduct the dimerization reaction to furnish the tetrahydroxanthone dimers, secalonic acids D, B, and F. The sequence is that of Atrochrysone carboxyl ACP thioesterase AacuM from Aspergillus aculeatus (strain ATCC 16872 / CBS 172.66 / WB 5094).